The primary structure comprises 130 residues: Small ribosomal subunit protein uS8 (130 aa).

This sequence belongs to the universal ribosomal protein uS8 family. As to quaternary structure, part of the 30S ribosomal subunit. Contacts proteins S5 and S12.

Functionally, one of the primary rRNA binding proteins, it binds directly to 16S rRNA central domain where it helps coordinate assembly of the platform of the 30S subunit. This Pseudomonas fluorescens (strain SBW25) protein is Small ribosomal subunit protein uS8.